We begin with the raw amino-acid sequence, 1489 residues long: ZEB2-regulated ABC transporter 1 (1489 aa).

Residues M1 to E55 form a disordered region. N-linked (GlcNAc...) asparagine glycosylation occurs at N7. The span at S44–Q53 shows a compositional bias: acidic residues. N-linked (GlcNAc...) asparagine glycosylation is found at N70, N73, N118, N332, and N469. Residues L152–D408 enclose the ABC transporter 1 domain. 5 consecutive transmembrane segments (helical) span residues L513–I533, G552–T572, I599–F619, G628–F648, and M662–V682. A glycan (N-linked (GlcNAc...) asparagine) is linked at N714. Residues G773–I793 form a helical membrane-spanning segment. The tract at residues P811–N834 is disordered. Residues E819 to N834 are compositionally biased toward polar residues. One can recognise an ABC transporter 2 domain in the interval F846 to G1088. Residue G882–T889 coordinates ATP. The next 5 helical transmembrane spans lie at A1190–L1210, F1218–F1238, I1269–F1289, W1307–I1327, and A1333–A1353. N-linked (GlcNAc...) asparagine glycosylation occurs at N1402. A helical membrane pass occupies residues G1457–I1477.

Belongs to the ABC transporter superfamily. ABCG family. PDR (TC 3.A.1.205) subfamily.

The protein localises to the cell membrane. It is found in the vacuole membrane. ABC transporter involved in zearalenone production. The chain is ZEB2-regulated ABC transporter 1 from Gibberella zeae (strain ATCC MYA-4620 / CBS 123657 / FGSC 9075 / NRRL 31084 / PH-1) (Wheat head blight fungus).